Here is a 63-residue protein sequence, read N- to C-terminus: Conotoxin Vi5.1b (63 aa).

Positions 1–22 (MLCVPVFIILFIIIPFAPTSES) are cleaved as a signal peptide. The propeptide occupies 23-50 (QPKTKEEVAKASVHDNAERTLQRLWNQS). At proline 62 the chain carries Proline amide.

The protein belongs to the conotoxin T superfamily. Post-translationally, contains 2 disulfide bonds that can be either 'C1-C3, C2-C4' or 'C1-C4, C2-C3', since these disulfide connectivities have been observed for conotoxins with cysteine framework V (for examples, see AC P0DQQ7 and AC P81755). In terms of tissue distribution, expressed by the venom duct.

It localises to the secreted. The protein is Conotoxin Vi5.1b of Conus virgo (Virgin cone).